A 629-amino-acid chain; its full sequence is tRNA uridine 5-carboxymethylaminomethyl modification enzyme MnmG (629 aa).

Position 13 to 18 (Gly-13 to Gly-18) interacts with FAD. NAD(+) is bound at residue Gly-273–Phe-287.

The protein belongs to the MnmG family. In terms of assembly, homodimer. Heterotetramer of two MnmE and two MnmG subunits. The cofactor is FAD.

It localises to the cytoplasm. Functionally, NAD-binding protein involved in the addition of a carboxymethylaminomethyl (cmnm) group at the wobble position (U34) of certain tRNAs, forming tRNA-cmnm(5)s(2)U34. The protein is tRNA uridine 5-carboxymethylaminomethyl modification enzyme MnmG of Colwellia psychrerythraea (strain 34H / ATCC BAA-681) (Vibrio psychroerythus).